A 401-amino-acid polypeptide reads, in one-letter code: E3 ubiquitin-protein ligase RGLG4 (401 aa).

Residues 1–43 form a disordered region; that stretch reads MTMGNFLKRFGSGKSRSSRNMTLGTTSSQSHEPSPSDPSLSLA. Over residues 8-19 the composition is skewed to low complexity; it reads KRFGSGKSRSSR. Over residues 20–32 the composition is skewed to polar residues; sequence NMTLGTTSSQSHE. Residues 79 to 299 form the VWFA domain; it reads NLILGVDFTK…KETAFALAAL (221 aa). The disordered stretch occupies residues 326-350; sequence VPRPPPIPYTPPTNAELPSTASPAS. Over residues 327–336 the composition is skewed to pro residues; it reads PRPPPIPYTP. Polar residues predominate over residues 341 to 350; it reads ELPSTASPAS. The segment at 357 to 390 adopts an RING-type zinc-finger fold; that stretch reads CPICLTNRKDVAFSCGHMTCGDCGSKISNCPICR.

In terms of assembly, interacts with UBC30, GRXS17 and GLB3. Widely expressed.

Its subcellular location is the cytoplasm. The protein localises to the nucleus. The enzyme catalyses S-ubiquitinyl-[E2 ubiquitin-conjugating enzyme]-L-cysteine + [acceptor protein]-L-lysine = [E2 ubiquitin-conjugating enzyme]-L-cysteine + N(6)-ubiquitinyl-[acceptor protein]-L-lysine.. Possesses E3 ubiquitin-protein ligase in vitro. Acts as upstream modulator of jasmonate (JA) signaling in response to various stimuli, such as JA-inhibited root growth, JA-inductive gene expression, coronatine-mediated pathogen susceptibility, wound-stimulated expression of JA-responsive genes and wound-induced JA biosynthesis. Controls fumonisin B1 (FB1)-triggered programmed cell death (PCD) by modulating the JA signaling pathway. May mediate salicylic acid (SA) suppression of JA signaling in FB1-induced responses. May mediate the formation of 'Lys-48'-linked multiubiquitin chains. Mediates the polyubiquitination and subsequent proteasomal degradation of the target protein GRXS17. This chain is E3 ubiquitin-protein ligase RGLG4, found in Arabidopsis thaliana (Mouse-ear cress).